A 472-amino-acid chain; its full sequence is tRNA-2-methylthio-N(6)-dimethylallyladenosine synthase (472 aa).

A disordered region spans residues 1 to 24 (MTGTPDVFPPATPGGTPLVALPAG). In terms of domain architecture, MTTase N-terminal spans 33–150 (GKLYIKTHGC…LPELIRARRE (118 aa)). [4Fe-4S] cluster contacts are provided by Cys42, Cys79, Cys113, Cys187, Cys191, and Cys194. Residues 173 to 407 (RADGASAFVS…RINAHAAGIS (235 aa)) form the Radical SAM core domain. One can recognise a TRAM domain in the interval 408-471 (EKMVGTVQTV…TNSLRARVVA (64 aa)).

It belongs to the methylthiotransferase family. MiaB subfamily. As to quaternary structure, monomer. It depends on [4Fe-4S] cluster as a cofactor.

The protein resides in the cytoplasm. It carries out the reaction N(6)-dimethylallyladenosine(37) in tRNA + (sulfur carrier)-SH + AH2 + 2 S-adenosyl-L-methionine = 2-methylsulfanyl-N(6)-dimethylallyladenosine(37) in tRNA + (sulfur carrier)-H + 5'-deoxyadenosine + L-methionine + A + S-adenosyl-L-homocysteine + 2 H(+). In terms of biological role, catalyzes the methylthiolation of N6-(dimethylallyl)adenosine (i(6)A), leading to the formation of 2-methylthio-N6-(dimethylallyl)adenosine (ms(2)i(6)A) at position 37 in tRNAs that read codons beginning with uridine. The chain is tRNA-2-methylthio-N(6)-dimethylallyladenosine synthase from Stenotrophomonas maltophilia (strain R551-3).